Here is a 393-residue protein sequence, read N- to C-terminus: Putative acid--amine ligase HI_0929 (393 aa).

Residue 103–105 (RFD) participates in ATP binding. Aspartate 105, glutamate 117, and asparagine 119 together coordinate Mg(2+). Residues lysine 267, lysine 303, glycine 310, glutamine 343, and 378 to 380 (AVT) each bind ATP.

Belongs to the glutathionylspermidine synthase preATP-grasp family.

Functionally, may be a ligase forming an amide bond. Shows ATPase activity. In Haemophilus influenzae (strain ATCC 51907 / DSM 11121 / KW20 / Rd), this protein is Putative acid--amine ligase HI_0929.